The following is a 513-amino-acid chain: MEKFEGYSEKQKSRQHYFVYPLLFQEYIYAFAHDYGLNGSEPVEIFGCNNKKFSSLLVNRLIIRMYQQNFLINSVNYPNQDRLLDHRNYFYSEFYSQILSEGFAIVVEIPLSLGQLSCPEEKEIPNFQNLQSIHSIFPFLEDKFLHLHYLSHIKIPYPIHLEILVQLLEYRSQDVPSLHLLRFFLYYYSNWNSFITSMKSIFLLKKENKRLFRFLYNSYVSEYEFFLLFLHKQSSCLRLTSSGTFLERIIFSGKMEHFGVMYPGFFRKTIWFFMDPLMHYVRYQGKAILASKGTLLLKKKWKSYLVNFSQYFFSFWTQPQRIRLNQLTNSCFDFLGYLSSVPINTLLVRNQMLENSFLIDTRMKKFDTTVLATPLVGSLSKAQFCTGSGHPISKPVWTDLSDWDILDRFGRICRNIFHYYSGSSKKQTLYRLKYILRLSCARTLARKHKSTVRTFMQRLGSVFLEEFFTEEEQVFSLMFTKTIHFSFHGSHSECIWYLDIIRINDLVNPLTLN.

It belongs to the intron maturase 2 family. MatK subfamily.

The protein resides in the plastid. It is found in the chloroplast. Usually encoded in the trnK tRNA gene intron. Probably assists in splicing its own and other chloroplast group II introns. The chain is Maturase K from Zea mays (Maize).